Consider the following 673-residue polypeptide: Potassium voltage-gated channel subfamily KQT member 1 (673 aa).

2 disordered regions span residues 1 to 28 (MAAA…RGSA) and 61 to 80 (GPSS…LGPR). Residues 1–118 (MAAATSPPRA…YNFLERPTGW (118 aa)) are Cytoplasmic-facing. Ser-27 is subject to Phosphoserine. Positions 66-75 (AAPAASPAAA) are enriched in low complexity. A helical membrane pass occupies residues 119–140 (KCFVYHFAVFLIVLVCLIFSVL). The Extracellular portion of the chain corresponds to 141–151 (STIEQYVALAT). Residues 152-174 (GTLFWMEIVLVVFFGTEYAVRLW) form a helical membrane-spanning segment. Topologically, residues 175–190 (SAGCRSKYVGIWGRLR) are cytoplasmic. Residues 191-216 (FARKPISIIDLIVVVASMVVLCVGSK) form a helical membrane-spanning segment. Residues 217-224 (GQVFATSA) lie on the Extracellular side of the membrane. A helical; Voltage-sensor transmembrane segment spans residues 225-240 (IRGIRFLQILRMLHVD). The interaction with KCNE3 stretch occupies residues 236–244 (MLHVDRQGG). The Cytoplasmic portion of the chain corresponds to 241 to 258 (RQGGTWRLLGSVVFIHRQ). Gln-242 contributes to the a 1,2-diacyl-sn-glycero-3-phospho-(1D-myo-inositol-4,5-bisphosphate) binding site. A helical membrane pass occupies residues 259-281 (ELITTLYIGFLGLIFSSYFVYLA). At 282 to 297 (EKDAVNESGQVEFGSY) the chain is on the extracellular side. Asn-287 is a glycosylation site (N-linked (GlcNAc...) asparagine). An intramembrane region (pore-forming) is located at residues 298–318 (ADALWWGVVTVTTIGYGDKVP). Residues 319-320 (QT) are Extracellular-facing. A helical membrane pass occupies residues 321–346 (WVGKTIASCFSVFAISFFALPAGILG). The Cytoplasmic portion of the chain corresponds to 347 to 673 (SGFALKVQQK…VPGRGPEEGS (327 aa)). The segment at 368-380 (AAASLIQTAWRCY) is interaction with CALM. Phosphoserine occurs at positions 405 and 407. The tract at residues 514–528 (KVIRRMQYFVAKKKF) is interaction with CALM; calcium-dependent. An interaction with KCNE1 C-terminus region spans residues 534–571 (PYDVRDVIEQYSQGHLNLMVRIKELQRRLDQSIGRPAL). An interaction with AKAP9 region spans residues 587–615 (IGARLNRVEDKVTQLDQRLELITDMLQQL). The segment at 588 to 619 (GARLNRVEDKVTQLDQRLELITDMLQQLLSLH) is C-terminal assembly domain (tetramerization). The segment at 619–673 (HRGGTPGSRAPGGGGAQVAQPCSGGSINPELFLPSNALPTYEQLTVPGRGPEEGS) is disordered. The segment covering 622–634 (GTPGSRAPGGGGA) has biased composition (gly residues).

The protein belongs to the potassium channel family. KQT (TC 1.A.1.15) subfamily. Kv7.1/KCNQ1 sub-subfamily. As to quaternary structure, tetramer. Heterotetramer with KCNE1; targets to the membrane raft. Interacts (via C-terminus) with CALM; forms a heterooctameric structure (with 4:4 KCNQ1:CALM stoichiometry) in a calcium-independent manner. Interacts with AKAP9; targets protein kinase A (PKA) catalytic and regulatory subunits and protein phosphatase 1 (PP1) to the KCNQ1-KCNE1 complex, allowing PKA-mediated phosphorylation and increase of delayed rectifier potassium channel activity. Interacts with KCNE2; form a heterooligomer complex that targets to the membrane raft and leading to currents with an apparently instantaneous activation, a rapid deactivation process and a linear current-voltage relationship and decreases the amplitude of the outward current. Interacts with AP2M1; mediates estrogen-induced internalization via clathrin-coated vesicles. Interacts with NEDD4L; promotes internalization and decreases I(Ks) currents. Interacts with USP2; counteracts the NEDD4L-specific down-regulation of I(Ks) and restore plasma membrane localization. Heterotetramer with KCNQ5; has a voltage-gated potassium channel activity. Interacts with KCNE3; four KCNE3 molecules are bound to one KCNQ1 tetramer (4:4 KCNQ1:KCNE3 stoichiometry); alters membrane raft localization; affects KCNQ1 structure and gating properties. Interacts with KCNE4; impairs KCNQ1 localization in lipid rafts and inhibits voltage-gated potassium channel activity. Interacts with KCNE5; impairs KCNQ1 localization in lipid rafts and only conducts current upon strong and continued depolarization. Interacts with SLC5A3; forms coregulatory channel-transporter complexes that modulate Na(+)-coupled myo-inositol influx through the transporter. In terms of processing, ubiquitinated by NEDD4L; promotes internalization. The ubiquitinylated form is internalized through a clathrin-mediated endocytosis by interacting with AP2M1 and is recycled back to the cell membrane via RAB4A and RAB11A. Deubiquitinated by USP2; counteracts the NEDD4L-specific down-regulation of I(Ks) and restores the membrane localization.

Its subcellular location is the cell membrane. The protein localises to the cytoplasmic vesicle membrane. The protein resides in the early endosome. It is found in the membrane raft. It localises to the endoplasmic reticulum. Its subcellular location is the basolateral cell membrane. The protein localises to the apical cell membrane. It catalyses the reaction K(+)(in) = K(+)(out). Its activity is regulated as follows. PIP2 molecule is essential to activate KCNQ channels by inducing the coupling of the voltage-sensing domain (VSD) and the pore-forming domain (PD). Upon channel activation, PIP2 disrupts the VSD-calmodulin/CALM interactions, causing the release of CALM from the VSD which triggers the opening of the gate. Calcium potentiates KCNQ1 channel current through calcium-bound CALM. Calcium-bound CALM competes with PIP2 to stabilize the channel open state. Functionally, pore-forming subunit of the voltage-gated potassium (Kv) channel involved in the regulation of cardiomyocyte excitability and important in normal development and functions of myocardium, inner ear, stomach and colon. Associates with KCNE beta subunits that modulates current kinetics. Induces a voltage-dependent by rapidly activating and slowly deactivating potassium-selective outward current. Also promotes a delayed voltage activated potassium current showing outward rectification characteristic. During beta-adrenergic receptor stimulation participates in cardiac repolarization by associating with KCNE1 to form the I(Ks) cardiac potassium current that increases the amplitude and slows down the activation kinetics of outward potassium current I(Ks). Muscarinic agonist oxotremorine-M strongly suppresses KCNQ1/KCNE1 current. When associated with KCNE3, forms the potassium channel that is important for cyclic AMP-stimulated intestinal secretion of chloride ions. This interaction with KCNE3 is reduced by 17beta-estradiol, resulting in the reduction of currents. During conditions of increased substrate load, maintains the driving force for proximal tubular and intestinal sodium ions absorption, gastric acid secretion, and cAMP-induced jejunal chloride ions secretion. Allows the provision of potassium ions to the luminal membrane of the secretory canaliculus in the resting state as well as during stimulated acid secretion. When associated with KCNE2, forms a heterooligomer complex leading to currents with an apparently instantaneous activation, a rapid deactivation process and a linear current-voltage relationship and decreases the amplitude of the outward current. When associated with KCNE4, inhibits voltage-gated potassium channel activity. When associated with KCNE5, this complex only conducts current upon strong and continued depolarization. Also forms a heterotetramer with KCNQ5 that has a voltage-gated potassium channel activity. Binds with phosphatidylinositol 4,5-bisphosphate. KCNQ1-KCNE2 channel associates with Na(+)-coupled myo-inositol symporter in the apical membrane of choroid plexus epithelium and regulates the myo-inositol gradient between blood and cerebrospinal fluid with an impact on neuron excitability. The polypeptide is Potassium voltage-gated channel subfamily KQT member 1 (Sus scrofa (Pig)).